The following is a 534-amino-acid chain: MNCSPPGSSTDTERQSSSSGTPATPCPTLAPTHPVRQANRLPIRLINMLTAHTGHLLHPEYLQPLSSTPISPIELDAKKSPLALLAQTCSQIGKPDPPPSSKLNSVTSSEKESGRSSSLKLGESPLEDKSSFKPYSKGGETRKESGSSAGGSADKAGFRVPSGSCQPFPHAPSPSSRVSSPGQHCDSKNNESQEKKEPEANKGSLETSQANPTLTRASISNSSAESSQSGDVTPSSKSDPPSLGSGHVAPVSPYKPGHSVFPLPPSGIGYHGSIVGAYAGYPSQYVHGLDHTKTSLVGNQLPGTLGLPGKPPSSSPLTGASPPSFMQGLCRDPYCLSYHNASHLGSSSCSTCVHDPSALKSGYPLVYPSHPLHSVHTTMSSSVTPSLSGHPLYTYGFMLQNDPVPHICNWVSASGPCDKRFATSEELLAHLRTHTALPGADKLLAGYPTSSFGSAASCHLHLPPGGPGSPTTLPGSLSLRSPHTLGLSRYHPYGKGHLTTPSGLPVPSLPAGSYYSPYALYGQRLTSASALGYQ.

Disordered regions lie at residues methionine 1 to valine 35, serine 90 to valine 251, and glutamine 300 to alanine 320. Low complexity-rich tracts occupy residues glutamine 15–proline 34, arginine 115–serine 124, and glycine 146–lysine 155. Residues serine 173–glycine 182 are compositionally biased toward polar residues. Positions cysteine 185–alanine 200 are enriched in basic and acidic residues. A compositionally biased stretch (polar residues) spans serine 204 to alanine 217. The segment covering serine 218–serine 229 has biased composition (low complexity). A compositionally biased stretch (polar residues) spans glycine 230–aspartate 239. A C2H2-type zinc finger spans residues histidine 406 to histidine 434.

This sequence belongs to the Elbow/Noc family.

The protein localises to the nucleus. Its subcellular location is the cytoplasm. In terms of biological role, transcriptional corepressor which does not bind directly to DNA and may regulate transcription through recruitment of histone deacetylases to gene promoters. Regulates cell adhesion, migration and proliferation. Involved in specification of the lateral neural plate border (NPB). May be required for segmental gene expression during hindbrain development. This Xenopus laevis (African clawed frog) protein is Zinc finger protein 703-A (znf703-a).